Consider the following 528-residue polypeptide: Lysine--tRNA ligase (528 aa).

Residues 36-44 (PSGTVHIGN) carry the 'HIGH' region motif. The short motif at 287 to 291 (KMSSS) is the 'KMSKS' region element.

The protein belongs to the class-I aminoacyl-tRNA synthetase family.

The protein localises to the cytoplasm. The enzyme catalyses tRNA(Lys) + L-lysine + ATP = L-lysyl-tRNA(Lys) + AMP + diphosphate. The chain is Lysine--tRNA ligase (lysS) from Treponema pallidum (strain Nichols).